The following is a 375-amino-acid chain: Succinyl-diaminopimelate desuccinylase (375 aa).

His-66 lines the Zn(2+) pocket. The active site involves Asp-68. Asp-99 contributes to the Zn(2+) binding site. Glu-133 (proton acceptor) is an active-site residue. Residues Glu-134, Glu-162, and His-348 each contribute to the Zn(2+) site.

This sequence belongs to the peptidase M20A family. DapE subfamily. In terms of assembly, homodimer. Requires Zn(2+) as cofactor. The cofactor is Co(2+).

It catalyses the reaction N-succinyl-(2S,6S)-2,6-diaminopimelate + H2O = (2S,6S)-2,6-diaminopimelate + succinate. It participates in amino-acid biosynthesis; L-lysine biosynthesis via DAP pathway; LL-2,6-diaminopimelate from (S)-tetrahydrodipicolinate (succinylase route): step 3/3. Functionally, catalyzes the hydrolysis of N-succinyl-L,L-diaminopimelic acid (SDAP), forming succinate and LL-2,6-diaminopimelate (DAP), an intermediate involved in the bacterial biosynthesis of lysine and meso-diaminopimelic acid, an essential component of bacterial cell walls. This Escherichia coli (strain SE11) protein is Succinyl-diaminopimelate desuccinylase.